Consider the following 130-residue polypeptide: Histone H2A type 1 (130 aa).

The segment at 1–22 (MSGRGKQGGKARAKAKTRSSRA) is disordered. Serine 2 carries the post-translational modification N-acetylserine. Serine 2 is subject to Phosphoserine; by RPS6KA5. The residue at position 4 (arginine 4) is a Citrulline; alternate. A Symmetric dimethylarginine; by PRMT5; alternate modification is found at arginine 4. Lysine 6 bears the N6-(2-hydroxyisobutyryl)lysine mark. The span at 7-19 (QGGKARAKAKTRS) shows a compositional bias: basic residues. The residue at position 10 (lysine 10) is an N6-(2-hydroxyisobutyryl)lysine; alternate. Position 10 is an N6-lactoyllysine; alternate (lysine 10). At lysine 10 the chain carries N6-succinyllysine; alternate. Residues lysine 14 and lysine 16 each participate in a glycyl lysine isopeptide (Lys-Gly) (interchain with G-Cter in ubiquitin) cross-link. The residue at position 37 (lysine 37) is an N6-(2-hydroxyisobutyryl)lysine; alternate. Lysine 37 carries the N6-(beta-hydroxybutyryl)lysine; alternate modification. Residue lysine 37 is modified to N6-crotonyllysine; alternate. Lysine 75 and lysine 76 each carry N6-(2-hydroxyisobutyryl)lysine. An N6-(2-hydroxyisobutyryl)lysine; alternate modification is found at lysine 96. Lysine 96 is modified (N6-succinyllysine; alternate). The residue at position 96 (lysine 96) is an N6-glutaryllysine; alternate. Position 100 is an N6-glutaryllysine (lysine 100). The residue at position 105 (glutamine 105) is an N5-methylglutamine. At lysine 119 the chain carries N6-(2-hydroxyisobutyryl)lysine; alternate. Lysine 119 and lysine 120 each carry N6-crotonyllysine; alternate. Residues lysine 119 and lysine 120 each carry the N6-glutaryllysine; alternate modification. Lysine 120 is covalently cross-linked (Glycyl lysine isopeptide (Lys-Gly) (interchain with G-Cter in ubiquitin); alternate). At threonine 121 the chain carries Phosphothreonine; by DCAF1. At lysine 126 the chain carries N6-crotonyllysine; alternate. Position 126 is an N6-glutaryllysine; alternate (lysine 126).

Belongs to the histone H2A family. As to quaternary structure, the nucleosome is a histone octamer containing two molecules each of H2A, H2B, H3 and H4 assembled in one H3-H4 heterotetramer and two H2A-H2B heterodimers. The octamer wraps approximately 147 bp of DNA. Interacts with VRK1; the interaction is mediated by the nucleosome acidic patch, a cluster of negatively charged residues of H2A and H2B forming a cleft within the nucleosome core. In terms of processing, deiminated on Arg-4 in granulocytes upon calcium entry. Monoubiquitination of Lys-120 (H2AK119Ub) by RING1, TRIM37 and RNF2/RING2 complex gives a specific tag for epigenetic transcriptional repression and participates in X chromosome inactivation of female mammals. It is involved in the initiation of both imprinted and random X inactivation. Ubiquitinated H2A is enriched in inactive X chromosome chromatin. Ubiquitination of H2A functions downstream of methylation of 'Lys-27' of histone H3 (H3K27me). H2AK119Ub by RNF2/RING2 can also be induced by ultraviolet and may be involved in DNA repair. Following DNA double-strand breaks (DSBs), it is ubiquitinated through 'Lys-63' linkage of ubiquitin moieties by the E2 ligase UBE2N and the E3 ligases RNF8 and RNF168, leading to the recruitment of repair proteins to sites of DNA damage. Ubiquitination at Lys-14 and Lys-16 (H2AK13Ub and H2AK15Ub, respectively) in response to DNA damage is initiated by RNF168 that mediates monoubiquitination at these 2 sites, and 'Lys-63'-linked ubiquitin are then conjugated to monoubiquitin; RNF8 is able to extend 'Lys-63'-linked ubiquitin chains in vitro. H2AK119Ub and ionizing radiation-induced 'Lys-63'-linked ubiquitination (H2AK13Ub and H2AK15Ub) are distinct events. Post-translationally, phosphorylation on Ser-2 (H2AS1ph) is enhanced during mitosis. Phosphorylation on Ser-2 by RPS6KA5/MSK1 directly represses transcription. Acetylation of H3 inhibits Ser-2 phosphorylation by RPS6KA5/MSK1. Phosphorylation at Thr-121 (H2AT120ph) by DCAF1 is present in the regulatory region of many tumor suppresor genes and down-regulates their transcription. In terms of processing, symmetric dimethylation on Arg-4 by the PRDM1/PRMT5 complex may play a crucial role in the germ-cell lineage. Glutamine methylation at Gln-105 (H2AQ104me) by FBL is specifically dedicated to polymerase I. It is present at 35S ribosomal DNA locus and impairs binding of the FACT complex. Post-translationally, crotonylation (Kcr) is specifically present in male germ cells and marks testis-specific genes in post-meiotic cells, including X-linked genes that escape sex chromosome inactivation in haploid cells. Crotonylation marks active promoters and enhancers and confers resistance to transcriptional repressors. It is also associated with post-meiotically activated genes on autosomes. In terms of processing, lactylated in macrophages by EP300/P300 by using lactoyl-CoA directly derived from endogenous or exogenous lactate, leading to stimulates gene transcription.

It is found in the nucleus. It localises to the chromosome. Core component of nucleosome. Nucleosomes wrap and compact DNA into chromatin, limiting DNA accessibility to the cellular machineries which require DNA as a template. Histones thereby play a central role in transcription regulation, DNA repair, DNA replication and chromosomal stability. DNA accessibility is regulated via a complex set of post-translational modifications of histones, also called histone code, and nucleosome remodeling. In Bos taurus (Bovine), this protein is Histone H2A type 1.